The chain runs to 393 residues: MVLLSILRILLWGLVLFMEHRVQMTQVGQPSIAHLPEAPTLPLIQELLEEAPGKQQRKPRVLGHPLRYMLELYQRSADASGHPRENRTIGATMVRLVRPLASVARPLRGSWHIQTLDFPLRPNRVAYQLVRATVVYRHQLHLTHSHLSCHVEPWVQKSPTNHFPSSGRGSSKPSLLPKTWTEMDIMEHVGQKLWNHKGRRVLRLRFVCQQPRGSEVLEFWWHGTSSLDTVFLLLYFNDTQSVQKTKPLPKGLKEFTEKDPSLLLRRARQAGSIASEVPGPSREHDGPESNQCSLHPFQVSFQQLGWDHWIIAPHLYTPNYCKGVCPRVLHYGLNSPNHAIIQNLVSELVDQNVPQPSCVPYKYVPISILLIEANGSILYKEYEGMIAQSCTCR.

A signal peptide spans 1–25 (MVLLSILRILLWGLVLFMEHRVQMT). The propeptide occupies 26–268 (QVGQPSIAHL…DPSLLLRRAR (243 aa)). Residues Asn86 and Asn237 are each glycosylated (N-linked (GlcNAc...) asparagine). Cystine bridges form between Cys292–Cys358, Cys321–Cys390, and Cys325–Cys392. Asn374 carries N-linked (GlcNAc...) asparagine glycosylation.

Belongs to the TGF-beta family. In terms of assembly, homodimer. But, in contrast to other members of this family, cannot be disulfide-linked.

The protein localises to the secreted. Its function is as follows. May be involved in follicular development. Oocyte-specific growth/differentiation factor that stimulates folliculogenesis and granulosa cell (GC) growth. In Ovis aries (Sheep), this protein is Bone morphogenetic protein 15 (BMP15).